We begin with the raw amino-acid sequence, 1742 residues long: NACHT and WD repeat domain-containing protein 2 (1742 aa).

LRR repeat units follow at residues 386–410, 677–698, 724–747, 883–906, and 925–953; these read FYEY…GHIN, LEDV…TRPS, VKNV…LYLQ, YSQE…VIAF, and LPKL…SSMD. The NACHT domain maps to 410 to 737; it reads NPLVVYGGPC…TLLVWANRHL (328 aa). WD repeat units lie at residues 963–1004, 1007–1046, 1140–1179, 1229–1271, 1272–1311, 1314–1353, 1355–1394, 1396–1434, 1476–1516, 1522–1561, and 1614–1653; these read LASS…LLRQ, TAQS…LLSE, FSGG…NPQL, RHNE…ASLQ, ESSG…AMSN, KTGK…IEAV, KHEG…NLFR, NGQR…RVCN, EDGI…ICRR, NFLK…LRVV, and SLYK…DAAL. The segment at 1702–1721 is disordered; that stretch reads PITVSDSSESNEATPSKKHN. The span at 1703–1715 shows a compositional bias: polar residues; the sequence is ITVSDSSESNEAT.

In Mus musculus (Mouse), this protein is NACHT and WD repeat domain-containing protein 2 (Nwd2).